Here is a 568-residue protein sequence, read N- to C-terminus: Proline--tRNA ligase (568 aa).

This sequence belongs to the class-II aminoacyl-tRNA synthetase family. ProS type 1 subfamily. In terms of assembly, homodimer.

It is found in the cytoplasm. The enzyme catalyses tRNA(Pro) + L-proline + ATP = L-prolyl-tRNA(Pro) + AMP + diphosphate. In terms of biological role, catalyzes the attachment of proline to tRNA(Pro) in a two-step reaction: proline is first activated by ATP to form Pro-AMP and then transferred to the acceptor end of tRNA(Pro). As ProRS can inadvertently accommodate and process non-cognate amino acids such as alanine and cysteine, to avoid such errors it has two additional distinct editing activities against alanine. One activity is designated as 'pretransfer' editing and involves the tRNA(Pro)-independent hydrolysis of activated Ala-AMP. The other activity is designated 'posttransfer' editing and involves deacylation of mischarged Ala-tRNA(Pro). The misacylated Cys-tRNA(Pro) is not edited by ProRS. The sequence is that of Proline--tRNA ligase from Listeria monocytogenes serotype 4a (strain HCC23).